The chain runs to 831 residues: Prolactin receptor (831 aa).

The N-terminal stretch at 1 to 23 (MKQNLISSVQIILLLPLTTVGLT) is a signal peptide. Residues 24 to 438 (SQSFPGKPKI…EIPNDFRVKD (415 aa)) are Extracellular-facing. 4 Fibronectin type-III domains span residues 30-128 (KPKI…VQPG), 129-232 (SPVN…SPPE), 233-331 (KPTI…VQPD), and 332-433 (PPAN…IPND). Cys-36 and Cys-46 are joined by a disulfide. N-linked (GlcNAc...) asparagine glycosylation is present at Asn-59. Cys-75 and Cys-86 are oxidised to a cystine. N-linked (GlcNAc...) asparagine glycosylation is found at Asn-91, Asn-100, Asn-112, Asn-132, Asn-262, Asn-303, Asn-315, and Asn-335. Zn(2+) is bound by residues Asp-414 and His-416. The short motif at 419–423 (WSEWS) is the WSXWS motif element. Residues 439–459 (MIVWIVLGVLSSLICLIMSWT) traverse the membrane as a helical segment. Residues 460-831 (MVLKGYRMIT…DPSSFMPSFK (372 aa)) are Cytoplasmic-facing. A Box 1 motif motif is present at residues 471 to 479 (ILPPVPGPK). Disordered regions lie at residues 527 to 563 (HQLM…SPSL) and 776 to 831 (HTPT…PSFK). A compositionally biased stretch (basic and acidic residues) spans 545-554 (TLKETDRDSG). Residues 777-803 (TPTSQEEPAKETSQNPQQGQVETNMSY) are compositionally biased toward polar residues.

Belongs to the type I cytokine receptor family. Type 1 subfamily.

It localises to the membrane. Its function is as follows. This is a receptor for the anterior pituitary hormone prolactin. The chain is Prolactin receptor (PRLR) from Meleagris gallopavo (Wild turkey).